Here is a 980-residue protein sequence, read N- to C-terminus: Valine--tRNA ligase (980 aa).

Residues 43 to 53 carry the 'HIGH' region motif; that stretch reads PNVTGTLHMGH. The 'KMSKS' region motif lies at 586 to 590; the sequence is KMSKS. Lys589 serves as a coordination point for ATP. Residues 914–980 are a coiled coil; the sequence is LVDMDAERMR…AGLREQRGKL (67 aa).

It belongs to the class-I aminoacyl-tRNA synthetase family. ValS type 1 subfamily. As to quaternary structure, monomer.

It localises to the cytoplasm. It carries out the reaction tRNA(Val) + L-valine + ATP = L-valyl-tRNA(Val) + AMP + diphosphate. Functionally, catalyzes the attachment of valine to tRNA(Val). As ValRS can inadvertently accommodate and process structurally similar amino acids such as threonine, to avoid such errors, it has a 'posttransfer' editing activity that hydrolyzes mischarged Thr-tRNA(Val) in a tRNA-dependent manner. This chain is Valine--tRNA ligase, found in Xanthomonas oryzae pv. oryzae (strain PXO99A).